A 179-amino-acid chain; its full sequence is Disulfide bond formation protein B (179 aa).

The Cytoplasmic segment spans residues Met1–Ala14. The chain crosses the membrane as a helical span at residues Trp15 to Tyr31. Residues Phe32–Val49 lie on the Periplasmic side of the membrane. The cysteines at positions 41 and 44 are disulfide-linked. The chain crosses the membrane as a helical span at residues Ala50–Pro65. The Cytoplasmic portion of the chain corresponds to Asn66–Trp72. Residues Leu73–Ile90 form a helical membrane-spanning segment. Topologically, residues Lys91–Glu146 are periplasmic. A disulfide bridge links Cys105 with Cys132. Residues Trp147–Ser165 form a helical membrane-spanning segment. Over Gln166–Arg179 the chain is Cytoplasmic.

It belongs to the DsbB family.

It is found in the cell inner membrane. Its function is as follows. Required for disulfide bond formation in some periplasmic proteins. Acts by oxidizing the DsbA protein. The polypeptide is Disulfide bond formation protein B (Haemophilus ducreyi (strain 35000HP / ATCC 700724)).